Consider the following 335-residue polypeptide: Glyoxylate reductase (335 aa).

NADP(+) is bound by residues 159–162 (MGRI), 181–183 (SRS), and 240–242 (TGR). Catalysis depends on residues Arg-242 and Glu-271. The Proton donor role is filled by His-290. 290–292 (HAA) is a binding site for NADP(+).

The protein belongs to the D-isomer specific 2-hydroxyacid dehydrogenase family. GyaR subfamily. Homodimer.

Its subcellular location is the cytoplasm. It catalyses the reaction glycolate + NAD(+) = glyoxylate + NADH + H(+). This Aeropyrum pernix (strain ATCC 700893 / DSM 11879 / JCM 9820 / NBRC 100138 / K1) protein is Glyoxylate reductase.